We begin with the raw amino-acid sequence, 141 residues long: Large ribosomal subunit protein uL13 (141 aa).

It belongs to the universal ribosomal protein uL13 family. As to quaternary structure, part of the 50S ribosomal subunit.

Functionally, this protein is one of the early assembly proteins of the 50S ribosomal subunit, although it is not seen to bind rRNA by itself. It is important during the early stages of 50S assembly. The chain is Large ribosomal subunit protein uL13 from Deinococcus deserti (strain DSM 17065 / CIP 109153 / LMG 22923 / VCD115).